We begin with the raw amino-acid sequence, 67 residues long: UPF0434 protein Reut_A0592 (67 aa).

The protein belongs to the UPF0434 family.

The protein is UPF0434 protein Reut_A0592 of Cupriavidus pinatubonensis (strain JMP 134 / LMG 1197) (Cupriavidus necator (strain JMP 134)).